Reading from the N-terminus, the 1040-residue chain is Multidrug resistance protein MdtB (1040 aa).

The next 12 helical transmembrane spans lie at 25–45 (LLMAAILLAGIIGYRFLPVAA), 347–367 (LMLAIALVVMIIYLFLRNIPA), 369–389 (IIPGVAVPLSLIGTFAVMVFL), 396–416 (LTLMALTIATGFVVDDAIVVI), 440–460 (IGFTIISLTFSLIAVLIPLLF), 472–492 (FAVTLAVAILISAVVSLTLTP), 537–557 (WLTLSVAFATLLLSVMLWIVI), 863–883 (LGSTVWLIVAAVVAMYIVLGV), 888–908 (FIHPITILSTLPTAGVGALLA), 910–930 (IIAGSELDIIAIIGIILLIGI), 968–988 (ILMTTLAALLGALPLMLSTGV), and 998–1018 (IAMVGGLLVSQVLTLFTTPVI).

Belongs to the resistance-nodulation-cell division (RND) (TC 2.A.6) family. MdtB subfamily. Part of a tripartite efflux system composed of MdtA, MdtB and MdtC. MdtB forms a heteromultimer with MdtC.

Its subcellular location is the cell inner membrane. The chain is Multidrug resistance protein MdtB from Salmonella dublin (strain CT_02021853).